A 357-amino-acid polypeptide reads, in one-letter code: EGF-like domain-containing protein 2 (357 aa).

The signal sequence occupies residues 1–20 (MPPSLSHLFLLSTFASLALC). 2 EGF-like domains span residues 21–55 (SFYCKNPGYPCLNGGTCLYNGECNCTSGFRGFNCG) and 61–93 (ISAACTVECHNKGICFNGDKCYCTKDYMGPTCQ). 6 disulfide bridges follow: Cys-24–Cys-37, Cys-31–Cys-43, Cys-45–Cys-54, Cys-65–Cys-75, Cys-69–Cys-81, and Cys-83–Cys-92.

As to expression, prismatic layer of shell (at protein level). Expressed primarily in the mantle with highest level in the mantle edge and lower level in the mantle pallium.

It localises to the secreted. The sequence is that of EGF-like domain-containing protein 2 from Pinctada maxima (Silver-lipped pearl oyster).